Reading from the N-terminus, the 336-residue chain is 4-hydroxy-3-methylbut-2-enyl diphosphate reductase (336 aa).

Cys-32 is a binding site for [4Fe-4S] cluster. 2 residues coordinate (2E)-4-hydroxy-3-methylbut-2-enyl diphosphate: His-61 and His-94. Residues His-61 and His-94 each contribute to the dimethylallyl diphosphate site. The isopentenyl diphosphate site is built by His-61 and His-94. Cys-116 contacts [4Fe-4S] cluster. His-148 is a (2E)-4-hydroxy-3-methylbut-2-enyl diphosphate binding site. Dimethylallyl diphosphate is bound at residue His-148. His-148 provides a ligand contact to isopentenyl diphosphate. Glu-150 serves as the catalytic Proton donor. Thr-189 contributes to the (2E)-4-hydroxy-3-methylbut-2-enyl diphosphate binding site. Cys-219 lines the [4Fe-4S] cluster pocket. Residues Ser-247, Ser-248, Asn-249, and Ser-292 each contribute to the (2E)-4-hydroxy-3-methylbut-2-enyl diphosphate site. The dimethylallyl diphosphate site is built by Ser-247, Ser-248, Asn-249, and Ser-292. 4 residues coordinate isopentenyl diphosphate: Ser-247, Ser-248, Asn-249, and Ser-292.

The protein belongs to the IspH family. [4Fe-4S] cluster serves as cofactor.

The catalysed reaction is isopentenyl diphosphate + 2 oxidized [2Fe-2S]-[ferredoxin] + H2O = (2E)-4-hydroxy-3-methylbut-2-enyl diphosphate + 2 reduced [2Fe-2S]-[ferredoxin] + 2 H(+). It catalyses the reaction dimethylallyl diphosphate + 2 oxidized [2Fe-2S]-[ferredoxin] + H2O = (2E)-4-hydroxy-3-methylbut-2-enyl diphosphate + 2 reduced [2Fe-2S]-[ferredoxin] + 2 H(+). It functions in the pathway isoprenoid biosynthesis; dimethylallyl diphosphate biosynthesis; dimethylallyl diphosphate from (2E)-4-hydroxy-3-methylbutenyl diphosphate: step 1/1. It participates in isoprenoid biosynthesis; isopentenyl diphosphate biosynthesis via DXP pathway; isopentenyl diphosphate from 1-deoxy-D-xylulose 5-phosphate: step 6/6. Functionally, catalyzes the conversion of 1-hydroxy-2-methyl-2-(E)-butenyl 4-diphosphate (HMBPP) into a mixture of isopentenyl diphosphate (IPP) and dimethylallyl diphosphate (DMAPP). Acts in the terminal step of the DOXP/MEP pathway for isoprenoid precursor biosynthesis. The polypeptide is 4-hydroxy-3-methylbut-2-enyl diphosphate reductase (Gluconobacter oxydans (strain 621H) (Gluconobacter suboxydans)).